An 84-amino-acid polypeptide reads, in one-letter code: Cytochrome b559 subunit alpha (84 aa).

The helical transmembrane segment at 24 to 38 (IIHAVTLPAIFIAGF) threads the bilayer. His26 serves as a coordination point for heme.

The protein belongs to the PsbE/PsbF family. In terms of assembly, heterodimer of an alpha subunit and a beta subunit. PSII is composed of 1 copy each of membrane proteins PsbA, PsbB, PsbC, PsbD, PsbE, PsbF, PsbH, PsbI, PsbJ, PsbK, PsbL, PsbM, PsbT, PsbX, PsbY, Psb30/Ycf12, peripheral proteins PsbO, CyanoQ (PsbQ), PsbU, PsbV and a large number of cofactors. It forms dimeric complexes. Requires heme b as cofactor.

It is found in the cellular thylakoid membrane. In terms of biological role, this b-type cytochrome is tightly associated with the reaction center of photosystem II (PSII). PSII is a light-driven water:plastoquinone oxidoreductase that uses light energy to abstract electrons from H(2)O, generating O(2) and a proton gradient subsequently used for ATP formation. It consists of a core antenna complex that captures photons, and an electron transfer chain that converts photonic excitation into a charge separation. The sequence is that of Cytochrome b559 subunit alpha from Prochlorococcus marinus subsp. pastoris (strain CCMP1986 / NIES-2087 / MED4).